A 200-amino-acid polypeptide reads, in one-letter code: NADH-quinone oxidoreductase chain 10 (200 aa).

The next 5 membrane-spanning stretches (helical) occupy residues M2 to I22, P26 to L46, F51 to V71, L90 to G110, and V144 to L164.

Belongs to the complex I subunit 6 family. In terms of assembly, NDH-1 is composed of at least 14 different subunits, Nqo1 to Nqo14. The complex has a L-shaped structure, with the hydrophobic arm (subunits Nqo7, Nqo8, Nqo10 to Nqo14) embedded in the inner membrane and the hydrophilic peripheral arm (subunits Nqo1 to Nqo6, Nqo9) protruding into the bacterial cytoplasm. The hydrophilic domain contains all the redox centers.

It localises to the cell inner membrane. The enzyme catalyses a quinone + NADH + 5 H(+)(in) = a quinol + NAD(+) + 4 H(+)(out). NDH-1 shuttles electrons from NADH, via FMN and iron-sulfur (Fe-S) centers, to quinones in the respiratory chain. The immediate electron acceptor for the enzyme in this species is believed to be ubiquinone. Couples the redox reaction to proton translocation (for every two electrons transferred, four hydrogen ions are translocated across the cytoplasmic membrane), and thus conserves the redox energy in a proton gradient. The sequence is that of NADH-quinone oxidoreductase chain 10 from Paracoccus denitrificans.